The chain runs to 531 residues: Bifunctional protein TrpGD (531 aa).

One can recognise a Glutamine amidotransferase type-1 domain in the interval 3–196 (DILLLDNIDS…LAWAQQKLEP (194 aa)). 57–59 (GPG) serves as a coordination point for L-glutamine. The active-site Nucleophile; for GATase activity is the cysteine 84. L-glutamine-binding positions include glutamine 88 and 134-135 (SL). Catalysis depends on for GATase activity residues histidine 170 and glutamate 172. An anthranilate phosphoribosyltransferase region spans residues 202–531 (PILEKLYQAQ…DRVTALAARG (330 aa)).

The protein in the C-terminal section; belongs to the anthranilate phosphoribosyltransferase family. As to quaternary structure, heterotetramer consisting of two non-identical subunits: a beta subunit (TrpG) and a large alpha subunit (TrpE).

It catalyses the reaction chorismate + L-glutamine = anthranilate + pyruvate + L-glutamate + H(+). The catalysed reaction is N-(5-phospho-beta-D-ribosyl)anthranilate + diphosphate = 5-phospho-alpha-D-ribose 1-diphosphate + anthranilate. It functions in the pathway amino-acid biosynthesis; L-tryptophan biosynthesis; L-tryptophan from chorismate: step 1/5. The protein operates within amino-acid biosynthesis; L-tryptophan biosynthesis; L-tryptophan from chorismate: step 2/5. Cooperatively feedback inhibited by tryptophan. In terms of biological role, part of a heterotetrameric complex that catalyzes the two-step biosynthesis of anthranilate, an intermediate in the biosynthesis of L-tryptophan. In the first step, the glutamine-binding beta subunit (TrpG) of anthranilate synthase (AS) provides the glutamine amidotransferase activity which generates ammonia as a substrate that, along with chorismate, is used in the second step, catalyzed by the large alpha subunit of AS (TrpE) to produce anthranilate. In the absence of TrpG, TrpE can synthesize anthranilate directly from chorismate and high concentrations of ammonia. In addition to synthesizing anthranilate, it also catalyzes the second step of the pathway, the transfer of the phosphoribosyl group of 5-phosphorylribose-1-pyrophosphate (PRPP) to anthranilate. This is Bifunctional protein TrpGD (trpGD) from Escherichia coli (strain K12).